The sequence spans 368 residues: Chaperone protein DnaJ (368 aa).

In terms of domain architecture, J spans 5–69 (DYYEVLGVAR…NQRARYDQFG (65 aa)). The segment at 125-207 (GVEKVITIPV…CRGAGRVRKN (83 aa)) adopts a CR-type zinc-finger fold. Cysteine 138, cysteine 141, cysteine 155, cysteine 158, cysteine 181, cysteine 184, cysteine 195, and cysteine 198 together coordinate Zn(2+). 4 CXXCXGXG motif repeats span residues 138-145 (CGTCHGSG), 155-162 (CKRCGGSG), 181-188 (CSTCHGRG), and 195-202 (CETCRGAG).

This sequence belongs to the DnaJ family. In terms of assembly, homodimer. Zn(2+) is required as a cofactor.

It is found in the cytoplasm. Functionally, participates actively in the response to hyperosmotic and heat shock by preventing the aggregation of stress-denatured proteins and by disaggregating proteins, also in an autonomous, DnaK-independent fashion. Unfolded proteins bind initially to DnaJ; upon interaction with the DnaJ-bound protein, DnaK hydrolyzes its bound ATP, resulting in the formation of a stable complex. GrpE releases ADP from DnaK; ATP binding to DnaK triggers the release of the substrate protein, thus completing the reaction cycle. Several rounds of ATP-dependent interactions between DnaJ, DnaK and GrpE are required for fully efficient folding. Also involved, together with DnaK and GrpE, in the DNA replication of plasmids through activation of initiation proteins. The polypeptide is Chaperone protein DnaJ (Exiguobacterium sibiricum (strain DSM 17290 / CCUG 55495 / CIP 109462 / JCM 13490 / 255-15)).